The chain runs to 83 residues: Small ribosomal subunit protein bS20 (83 aa).

Belongs to the bacterial ribosomal protein bS20 family.

In terms of biological role, binds directly to 16S ribosomal RNA. In Flavobacterium psychrophilum (strain ATCC 49511 / DSM 21280 / CIP 103535 / JIP02/86), this protein is Small ribosomal subunit protein bS20.